The chain runs to 136 residues: Large ribosomal subunit protein uL16c (136 aa).

This sequence belongs to the universal ribosomal protein uL16 family. In terms of assembly, part of the 50S ribosomal subunit.

The protein resides in the plastid. The protein localises to the chloroplast. This Chlamydomonas sp. (strain WXM) protein is Large ribosomal subunit protein uL16c.